The primary structure comprises 152 residues: Plant UBX domain-containing protein 12 (152 aa).

Positions 32–61 (KRFSEEESEETENTTNSSNAVFGFPNLPEE) are disordered. The region spanning 67–150 (DQSVLCRICV…GLANSLVSVT (84 aa)) is the UBX domain.

The chain is Plant UBX domain-containing protein 12 from Arabidopsis thaliana (Mouse-ear cress).